The primary structure comprises 356 residues: Isocitrate dehydrogenase [NAD] subunit 1, mitochondrial (356 aa).

Positions 106, 137, and 224 each coordinate substrate. Residue D224 coordinates Mg(2+).

The protein belongs to the isocitrate and isopropylmalate dehydrogenases family. As to quaternary structure, octamer of two non-identical subunits IDH1 and IDH2. It depends on Mg(2+) as a cofactor. Requires Mn(2+) as cofactor.

It localises to the mitochondrion. The enzyme catalyses D-threo-isocitrate + NAD(+) = 2-oxoglutarate + CO2 + NADH. Its function is as follows. Performs an essential role in the oxidative function of the citric acid cycle. Also binds RNA; specifically to the 5'-untranslated leaders of mitochondrial mRNAs. In Schizosaccharomyces pombe (strain 972 / ATCC 24843) (Fission yeast), this protein is Isocitrate dehydrogenase [NAD] subunit 1, mitochondrial (idh1).